Here is a 148-residue protein sequence, read N- to C-terminus: 3-dehydroquinate dehydratase (148 aa).

Tyr24 serves as the catalytic Proton acceptor. 3 residues coordinate substrate: Asn75, His81, and Asp88. His101 acts as the Proton donor in catalysis. Residues 102 to 103 (LS) and Arg112 contribute to the substrate site.

Belongs to the type-II 3-dehydroquinase family. As to quaternary structure, homododecamer.

The enzyme catalyses 3-dehydroquinate = 3-dehydroshikimate + H2O. Its pathway is metabolic intermediate biosynthesis; chorismate biosynthesis; chorismate from D-erythrose 4-phosphate and phosphoenolpyruvate: step 3/7. Functionally, catalyzes a trans-dehydration via an enolate intermediate. The protein is 3-dehydroquinate dehydratase of Bartonella henselae (strain ATCC 49882 / DSM 28221 / CCUG 30454 / Houston 1) (Rochalimaea henselae).